The sequence spans 481 residues: Aspartyl/glutamyl-tRNA(Asn/Gln) amidotransferase subunit B (481 aa).

This sequence belongs to the GatB/GatE family. GatB subfamily. In terms of assembly, heterotrimer of A, B and C subunits.

The enzyme catalyses L-glutamyl-tRNA(Gln) + L-glutamine + ATP + H2O = L-glutaminyl-tRNA(Gln) + L-glutamate + ADP + phosphate + H(+). The catalysed reaction is L-aspartyl-tRNA(Asn) + L-glutamine + ATP + H2O = L-asparaginyl-tRNA(Asn) + L-glutamate + ADP + phosphate + 2 H(+). Its function is as follows. Allows the formation of correctly charged Asn-tRNA(Asn) or Gln-tRNA(Gln) through the transamidation of misacylated Asp-tRNA(Asn) or Glu-tRNA(Gln) in organisms which lack either or both of asparaginyl-tRNA or glutaminyl-tRNA synthetases. The reaction takes place in the presence of glutamine and ATP through an activated phospho-Asp-tRNA(Asn) or phospho-Glu-tRNA(Gln). This is Aspartyl/glutamyl-tRNA(Asn/Gln) amidotransferase subunit B from Pseudomonas entomophila (strain L48).